Consider the following 154-residue polypeptide: uncharacterized protein (154 aa).

The protein localises to the mitochondrion. This is an uncharacterized protein from Vicia faba (Broad bean).